A 219-amino-acid chain; its full sequence is 23.6 kDa heat shock protein, mitochondrial (219 aa).

The N-terminal 29 residues, 1-29 (MALARQCLSKRLAAGCALARPLHAASPVA), are a transit peptide targeting the mitochondrion. The sHSP domain occupies 104–219 (QVAETLTRPL…KRSVTEVKVR (116 aa)).

The protein belongs to the small heat shock protein (HSP20) family. In terms of assembly, may form oligomeric structures.

Its subcellular location is the mitochondrion. This chain is 23.6 kDa heat shock protein, mitochondrial (HSP23.6), found in Oryza sativa subsp. japonica (Rice).